A 228-amino-acid chain; its full sequence is Large ribosomal subunit protein uL23m (228 aa).

The segment at 194-228 (PEEEGWSEVEENLPLDESAESAAEESSSKGSETRQ) is disordered. A compositionally biased stretch (acidic residues) spans 195–216 (EEEGWSEVEENLPLDESAESAA).

It belongs to the universal ribosomal protein uL23 family. As to quaternary structure, component of the mitochondrial large ribosomal subunit (mt-LSU). Mature N.crassa 74S mitochondrial ribosomes consist of a small (37S) and a large (54S) subunit. The 37S small subunit contains a 16S ribosomal RNA (16S mt-rRNA) and 32 different proteins. The 54S large subunit contains a 23S rRNA (23S mt-rRNA) and 42 different proteins. uL23m forms the wall of the exit tunnel.

Its subcellular location is the mitochondrion. Its function is as follows. Component of the mitochondrial ribosome (mitoribosome), a dedicated translation machinery responsible for the synthesis of mitochondrial genome-encoded proteins, including at least some of the essential transmembrane subunits of the mitochondrial respiratory chain. The mitoribosomes are attached to the mitochondrial inner membrane and translation products are cotranslationally integrated into the membrane. In Neurospora crassa (strain ATCC 24698 / 74-OR23-1A / CBS 708.71 / DSM 1257 / FGSC 987), this protein is Large ribosomal subunit protein uL23m (mrp20).